Reading from the N-terminus, the 112-residue chain is Nucleoid-associated protein Pfl01_1806 (112 aa).

It belongs to the YbaB/EbfC family. As to quaternary structure, homodimer.

It localises to the cytoplasm. Its subcellular location is the nucleoid. Functionally, binds to DNA and alters its conformation. May be involved in regulation of gene expression, nucleoid organization and DNA protection. In Pseudomonas fluorescens (strain Pf0-1), this protein is Nucleoid-associated protein Pfl01_1806.